Here is a 129-residue protein sequence, read N- to C-terminus: Small ribosomal subunit protein uS11 (129 aa).

Residues 109-129 form a disordered region; that stretch reads VDDTPVPHNGCRPKKKFRKAS. The span at 119–129 shows a compositional bias: basic residues; that stretch reads CRPKKKFRKAS.

Belongs to the universal ribosomal protein uS11 family. Part of the 30S ribosomal subunit. Interacts with proteins S7 and S18. Binds to the C-terminus of IF-3; however exactly how IF-3 interacts with the 30S subunit is unclear.

Located on the upper part of the platform of the 30S subunit, where it bridges several disparate RNA helices of the 16S rRNA. Forms part of the Shine-Dalgarno cleft in the 70S ribosome. The protein is Small ribosomal subunit protein uS11 (rpsK) of Thermus thermophilus (strain ATCC BAA-163 / DSM 7039 / HB27).